A 383-amino-acid chain; its full sequence is Succinyl-diaminopimelate desuccinylase (383 aa).

H79 is a Zn(2+) binding site. D81 is a catalytic residue. D110 provides a ligand contact to Zn(2+). Residue E141 is the Proton acceptor of the active site. Positions 142, 170, and 355 each coordinate Zn(2+).

The protein belongs to the peptidase M20A family. DapE subfamily. Homodimer. Requires Zn(2+) as cofactor. The cofactor is Co(2+).

The catalysed reaction is N-succinyl-(2S,6S)-2,6-diaminopimelate + H2O = (2S,6S)-2,6-diaminopimelate + succinate. It participates in amino-acid biosynthesis; L-lysine biosynthesis via DAP pathway; LL-2,6-diaminopimelate from (S)-tetrahydrodipicolinate (succinylase route): step 3/3. Catalyzes the hydrolysis of N-succinyl-L,L-diaminopimelic acid (SDAP), forming succinate and LL-2,6-diaminopimelate (DAP), an intermediate involved in the bacterial biosynthesis of lysine and meso-diaminopimelic acid, an essential component of bacterial cell walls. The protein is Succinyl-diaminopimelate desuccinylase of Helicobacter pylori (strain HPAG1).